A 224-amino-acid chain; its full sequence is tRNA (guanine-N(7)-)-methyltransferase (224 aa).

Glu-54, Glu-79, Glu-106, and Asp-129 together coordinate S-adenosyl-L-methionine. The active site involves Asp-129. Residues Lys-133 and Asp-165 each coordinate substrate.

The protein belongs to the class I-like SAM-binding methyltransferase superfamily. TrmB family.

It carries out the reaction guanosine(46) in tRNA + S-adenosyl-L-methionine = N(7)-methylguanosine(46) in tRNA + S-adenosyl-L-homocysteine. It participates in tRNA modification; N(7)-methylguanine-tRNA biosynthesis. Functionally, catalyzes the formation of N(7)-methylguanine at position 46 (m7G46) in tRNA. This is tRNA (guanine-N(7)-)-methyltransferase from Chlamydia abortus (strain DSM 27085 / S26/3) (Chlamydophila abortus).